We begin with the raw amino-acid sequence, 296 residues long: Protoheme IX farnesyltransferase (296 aa).

Residues 1 to 9 lie on the Cytoplasmic side of the membrane; that stretch reads MMFKQYLQV. Residues 10–28 form a helical membrane-spanning segment; sequence TKPGIIFGNLISVIGGFLL. Residues 29 to 37 lie on the Periplasmic side of the membrane; sequence ASKGSIDYP. The helical transmembrane segment at 38–56 threads the bilayer; it reads LFIYTLVGVSLVVASGCVF. Residues 57-78 lie on the Cytoplasmic side of the membrane; the sequence is NNYIDRDIDRKMERTKNRVLVK. Residues 79–97 traverse the membrane as a helical segment; that stretch reads GLISPGVSLVYATLLGIAG. Over 98–107 the chain is Periplasmic; sequence FMLLWFGANP. A helical transmembrane segment spans residues 108–126; sequence LACWLGVMGFVVYVGVYSL. Residues 127 to 197 are Cytoplasmic-facing; that stretch reads YMKRHSVYGT…YQAANIPVLP (71 aa). The chain crosses the membrane as a helical span at residues 198 to 216; sequence VIKGISVAKNHITLYIIAF. Residues 217 to 228 lie on the Periplasmic side of the membrane; the sequence is AVATLMLTLGGY. The chain crosses the membrane as a helical span at residues 229–247; sequence AGYKYLVVAAAVSVWWLGM. Residues 248 to 268 lie on the Cytoplasmic side of the membrane; that stretch reads ALRGYKVEDDKVWARKLFGFS. The helical transmembrane segment at 269 to 287 threads the bilayer; the sequence is IIAITALSIMMSVDFMVPN. Over 288 to 296 the chain is Periplasmic; it reads SQNLLTYVW.

This sequence belongs to the UbiA prenyltransferase family. Protoheme IX farnesyltransferase subfamily.

The protein resides in the cell inner membrane. The catalysed reaction is heme b + (2E,6E)-farnesyl diphosphate + H2O = Fe(II)-heme o + diphosphate. The protein operates within porphyrin-containing compound metabolism; heme O biosynthesis; heme O from protoheme: step 1/1. Converts heme B (protoheme IX) to heme O by substitution of the vinyl group on carbon 2 of heme B porphyrin ring with a hydroxyethyl farnesyl side group. This is Protoheme IX farnesyltransferase from Salmonella typhi.